Consider the following 423-residue polypeptide: Large ribosomal subunit protein mL37 (423 aa).

A mitochondrion-targeting transit peptide spans 1–29 (MALASGPAMRALAGSARLGLGGYGAPKRG).

The protein belongs to the mitochondrion-specific ribosomal protein mL37 family. In terms of assembly, component of the mitochondrial ribosome large subunit (39S) which comprises a 16S rRNA and about 50 distinct proteins.

The protein localises to the mitochondrion. In Rattus norvegicus (Rat), this protein is Large ribosomal subunit protein mL37 (Mrpl37).